We begin with the raw amino-acid sequence, 270 residues long: 5'-nucleotidase SurE (270 aa).

A divalent metal cation-binding residues include Asp8, Asp9, Ser40, and Asn98.

This sequence belongs to the SurE nucleotidase family. A divalent metal cation serves as cofactor.

It localises to the cytoplasm. It catalyses the reaction a ribonucleoside 5'-phosphate + H2O = a ribonucleoside + phosphate. In terms of biological role, nucleotidase that shows phosphatase activity on nucleoside 5'-monophosphates. The polypeptide is 5'-nucleotidase SurE (Cyanothece sp. (strain PCC 7425 / ATCC 29141)).